The primary structure comprises 121 residues: Protransforming growth factor alpha (121 aa).

Leucine 1 is a signal peptide. The propeptide at 2–16 (ENSTSLLSDPPVAAA) is removed in mature form. The Extracellular segment spans residues 2–75 (ENSTSLLSDP…AVVAASQKKQ (74 aa)). Asparagine 3 carries N-linked (GlcNAc...) asparagine glycosylation. An EGF-like domain is found at 20–60 (HFNDCPDSHTQFCFHGTCRFLVQEDRPACVCHSGYVGARCE). 3 cysteine pairs are disulfide-bonded: cysteine 24–cysteine 37, cysteine 32–cysteine 48, and cysteine 50–cysteine 59. The propeptide at 67–121 (VVAASQKKQAITALVVVSIVALAVLIITCVLIHCCQVRKHCEWCRALICRHEKPS) is removed in mature form. Residues 76-101 (AITALVVVSIVALAVLIITCVLIHCC) form a helical membrane-spanning segment.

As to quaternary structure, interacts with the PDZ domains of MAGI3, SDCBP and SNTA1. The interaction with SDCBP, is required for the targeting to the cell surface. In the endoplasmic reticulum, in its immature form (i.e. with a prosegment and lacking full N-glycosylation), interacts with CNIH. In the Golgi apparatus, may form a complex with CNIH and GORASP2. Interacts (via cytoplasmic C-terminal domain) with NKD2. In terms of tissue distribution, hypothalamus.

Its subcellular location is the secreted. The protein localises to the extracellular space. It is found in the cell membrane. Its function is as follows. TGF alpha is a mitogenic polypeptide that is able to bind to the EGF receptor/EGFR and to act synergistically with TGF beta to promote anchorage-independent cell proliferation in soft agar. The chain is Protransforming growth factor alpha (TGFA) from Macaca mulatta (Rhesus macaque).